Here is a 113-residue protein sequence, read N- to C-terminus: Retrotransposon Gag-like protein 8A (113 aa).

It belongs to the FAM127 family.

In Homo sapiens (Human), this protein is Retrotransposon Gag-like protein 8A.